A 233-amino-acid chain; its full sequence is Enolase-phosphatase E1 (233 aa).

Positions 16 and 18 each coordinate Mg(2+). Substrate contacts are provided by residues 131–132 (SS) and K167. D193 is a binding site for Mg(2+).

It belongs to the HAD-like hydrolase superfamily. MasA/MtnC family. Monomer. Mg(2+) serves as cofactor.

Its subcellular location is the cytoplasm. It localises to the nucleus. The enzyme catalyses 5-methylsulfanyl-2,3-dioxopentyl phosphate + H2O = 1,2-dihydroxy-5-(methylsulfanyl)pent-1-en-3-one + phosphate. The protein operates within amino-acid biosynthesis; L-methionine biosynthesis via salvage pathway; L-methionine from S-methyl-5-thio-alpha-D-ribose 1-phosphate: step 3/6. Its pathway is amino-acid biosynthesis; L-methionine biosynthesis via salvage pathway; L-methionine from S-methyl-5-thio-alpha-D-ribose 1-phosphate: step 4/6. Functionally, bifunctional enzyme that catalyzes the enolization of 2,3-diketo-5-methylthiopentyl-1-phosphate (DK-MTP-1-P) into the intermediate 2-hydroxy-3-keto-5-methylthiopentenyl-1-phosphate (HK-MTPenyl-1-P), which is then dephosphorylated to form the acireductone 1,2-dihydroxy-3-keto-5-methylthiopentene (DHK-MTPene). The chain is Enolase-phosphatase E1 from Meyerozyma guilliermondii (strain ATCC 6260 / CBS 566 / DSM 6381 / JCM 1539 / NBRC 10279 / NRRL Y-324) (Yeast).